The following is a 191-amino-acid chain: uncharacterized protein (191 aa).

The tract at residues 52-112 (NKQENQTESS…TNKDTNIETN (61 aa)) is disordered. A compositionally biased stretch (polar residues) spans 57-70 (QTESSDLNNTDSLV). The span at 71–94 (DSNSDNQTNTTDTSTNNVENLNEN) shows a compositional bias: low complexity. The stretch at 138–172 (QDKISDTERIRFLEEKVSKLERKIRTLSLQMTKIS) forms a coiled coil.

This is an uncharacterized protein from Acanthamoeba polyphaga mimivirus (APMV).